A 146-amino-acid polypeptide reads, in one-letter code: D-aminoacyl-tRNA deacylase (146 aa).

Positions 137 to 138 (GP) match the Gly-cisPro motif, important for rejection of L-amino acids motif.

The protein belongs to the DTD family. In terms of assembly, homodimer.

Its subcellular location is the cytoplasm. It carries out the reaction glycyl-tRNA(Ala) + H2O = tRNA(Ala) + glycine + H(+). It catalyses the reaction a D-aminoacyl-tRNA + H2O = a tRNA + a D-alpha-amino acid + H(+). An aminoacyl-tRNA editing enzyme that deacylates mischarged D-aminoacyl-tRNAs. Also deacylates mischarged glycyl-tRNA(Ala), protecting cells against glycine mischarging by AlaRS. Acts via tRNA-based rather than protein-based catalysis; rejects L-amino acids rather than detecting D-amino acids in the active site. By recycling D-aminoacyl-tRNA to D-amino acids and free tRNA molecules, this enzyme counteracts the toxicity associated with the formation of D-aminoacyl-tRNA entities in vivo and helps enforce protein L-homochirality. The polypeptide is D-aminoacyl-tRNA deacylase (Variovorax paradoxus (strain S110)).